Consider the following 322-residue polypeptide: Malate dehydrogenase 1 (322 aa).

NAD(+) is bound by residues 10 to 15 and Asp-34; that span reads GSGQIG. Arg-83 and Arg-89 together coordinate substrate. NAD(+) contacts are provided by residues Asn-96 and 119–121; that span reads ITN. Residues Asn-121 and Arg-152 each coordinate substrate. Catalysis depends on His-176, which acts as the Proton acceptor.

It belongs to the LDH/MDH superfamily. MDH type 3 family.

The catalysed reaction is (S)-malate + NAD(+) = oxaloacetate + NADH + H(+). Its function is as follows. Catalyzes the reversible oxidation of malate to oxaloacetate. The sequence is that of Malate dehydrogenase 1 from Rhodopseudomonas palustris (strain BisB18).